The sequence spans 86 residues: uncharacterized protein (86 aa).

Residues 63–85 (VGGRSPSIQNSFFFFFFFFFFFF) traverse the membrane as a helical segment.

The protein localises to the membrane. This is an uncharacterized protein from Dictyostelium discoideum (Social amoeba).